A 430-amino-acid polypeptide reads, in one-letter code: MKQAFRLMVGLLVLWASVLHAEVRIVITQGVDSARPIGVVPFKWMGPGTAPENIGGIIAADLRNSGKFNPIDASRMPQQPSAAAEVSPAAWTALGIDAVVVGQVQPGADGSYLVSYQLVDTSGNPGSVLVQNQYKVTGQWLRYAAHTASDEVFEKLTGIKGAFRTRIAYVVQTNGGQFPYELRVADYDGYNQFVVHRSAEPLMSPAWSPDGSKLAYVTFESGRSALVIQTLSNGAIRQVASFPRHNGSPAFSPDGSKLAFALSKTGSLNLYVMDLASGAIRQVTDGRSNNTEPTWFPDSQNLAFTSDQAGRPQIYKMNINGGVAQRLTWEGSQNQDAEVSPDGKFLVMVSSSAGAQHIAKLDLGTNATQVLTDTFLDETPSIAPNGTMVIYSSTQGLGSVLQLVSIDGRFKARLPATDGQVKFPAWSPYL.

Positions 1-21 (MKQAFRLMVGLLVLWASVLHA) are cleaved as a signal peptide.

It belongs to the TolB family. As to quaternary structure, the Tol-Pal system is composed of five core proteins: the inner membrane proteins TolA, TolQ and TolR, the periplasmic protein TolB and the outer membrane protein Pal. They form a network linking the inner and outer membranes and the peptidoglycan layer.

The protein localises to the periplasm. In terms of biological role, part of the Tol-Pal system, which plays a role in outer membrane invagination during cell division and is important for maintaining outer membrane integrity. TolB occupies a key intermediary position in the Tol-Pal system because it communicates directly with both membrane-embedded components, Pal in the outer membrane and TolA in the inner membrane. This is Tol-Pal system protein TolB from Edwardsiella ictaluri (strain 93-146).